The primary structure comprises 239 residues: Cytochrome c oxidase subunit 2 (239 aa).

Residues 1–26 are Mitochondrial intermembrane-facing; it reads MATPAQLGLMDAASPVMEEMIYFHDH. The chain crosses the membrane as a helical span at residues 27–48; sequence VMLVLILITCLIFYSMLVLISS. The Mitochondrial matrix portion of the chain corresponds to 49-62; sequence KYIYRFLTDGHVIE. The helical transmembrane segment at 63-82 threads the bilayer; sequence TVWTVIPAIILVVVALPSLK. Over 83-239 the chain is Mitochondrial intermembrane; that stretch reads LLYLTDELDN…ESLGSLNMKR (157 aa). Residues His-161, Cys-196, Glu-198, Cys-200, His-204, and Met-207 each coordinate Cu cation. Residue Glu-198 participates in Mg(2+) binding.

The protein belongs to the cytochrome c oxidase subunit 2 family. As to quaternary structure, component of the cytochrome c oxidase (complex IV, CIV), a multisubunit enzyme composed of a catalytic core of 3 subunits and several supernumerary subunits. The complex exists as a monomer or a dimer and forms supercomplexes (SCs) in the inner mitochondrial membrane with ubiquinol-cytochrome c oxidoreductase (cytochrome b-c1 complex, complex III, CIII). Cu cation is required as a cofactor.

It localises to the mitochondrion inner membrane. It catalyses the reaction 4 Fe(II)-[cytochrome c] + O2 + 8 H(+)(in) = 4 Fe(III)-[cytochrome c] + 2 H2O + 4 H(+)(out). Its function is as follows. Component of the cytochrome c oxidase, the last enzyme in the mitochondrial electron transport chain which drives oxidative phosphorylation. The respiratory chain contains 3 multisubunit complexes succinate dehydrogenase (complex II, CII), ubiquinol-cytochrome c oxidoreductase (cytochrome b-c1 complex, complex III, CIII) and cytochrome c oxidase (complex IV, CIV), that cooperate to transfer electrons derived from NADH and succinate to molecular oxygen, creating an electrochemical gradient over the inner membrane that drives transmembrane transport and the ATP synthase. Cytochrome c oxidase is the component of the respiratory chain that catalyzes the reduction of oxygen to water. Electrons originating from reduced cytochrome c in the intermembrane space (IMS) are transferred via the dinuclear copper A center (CU(A)) of subunit 2 and heme A of subunit 1 to the active site in subunit 1, a binuclear center (BNC) formed by heme A3 and copper B (CU(B)). The BNC reduces molecular oxygen to 2 water molecules using 4 electrons from cytochrome c in the IMS and 4 protons from the mitochondrial matrix. In Branchiostoma lanceolatum (Common lancelet), this protein is Cytochrome c oxidase subunit 2 (COII).